The sequence spans 326 residues: MNPLTKVKLINELNEREVQLGVAEKVSWHSEYKHSAWIFVGGLPYELTEGDIICVFSQYGEIVNINLVRDKKTGKSKGFCFLCYEDQRSTVLAVDNFNGIKIKGRTIRVDHVSNYRAPQESEDVDDVTRELQEKGCGVKTPPSSPPEVSEDEDAKLTKKHKKDKKEKKKRKKEKTEGQAQAEQPSCSRSATVKEKKDERASRKHSSKTSERAQKSEHRESKKSHSGSPDGRSSYHARAEDPECKARKEKPKHEHKSASRREAEEKSRERERGRSSGTHSGRHRGHSDGRSHRSRSRSRSPDKSHRHKKYRHSRERDSYHGSDRRHH.

A Glycyl lysine isopeptide (Lys-Gly) (interchain with G-Cter in SUMO2) cross-link involves residue Lys8. The 79-residue stretch at 36-114 (AWIFVGGLPY…RTIRVDHVSN (79 aa)) folds into the RRM domain. The disordered stretch occupies residues 117-326 (APQESEDVDD…SYHGSDRRHH (210 aa)). Thr140 is modified (phosphothreonine). At Ser149 the chain carries Phosphoserine. Residues 157 to 172 (TKKHKKDKKEKKKRKK) are compositionally biased toward basic residues. A compositionally biased stretch (polar residues) spans 177 to 190 (GQAQAEQPSCSRSA). Basic and acidic residues-rich tracts occupy residues 191-200 (TVKEKKDERA), 207-219 (KTSERAQKSEHRE), 236-245 (ARAEDPECKA), and 255-273 (KSASRREAEEKSRERERGR). Phosphoserine is present on Ser274. A compositionally biased stretch (basic residues) spans 291-312 (HRSRSRSRSPDKSHRHKKYRHS). Residues 313-326 (RERDSYHGSDRRHH) are compositionally biased toward basic and acidic residues.

The protein belongs to the IST3 family. As to quaternary structure, part of the activated spliceosome B/catalytic step 1 spliceosome, one of the forms of the spliceosome which has a well-formed active site but still cannot catalyze the branching reaction and is composed of at least 52 proteins, the U2, U5 and U6 snRNAs and the pre-mRNA. Component of the minor spliceosome, which splices U12-type introns.

It is found in the nucleus. Functionally, involved in pre-mRNA splicing as component of the activated spliceosome. As a component of the minor spliceosome, involved in the splicing of U12-type introns in pre-mRNAs. The sequence is that of RNA-binding motif protein, X-linked 2 (Rbmx2) from Mus musculus (Mouse).